A 479-amino-acid chain; its full sequence is Alliin lyase (479 aa).

Positions 1-25 are cleaved as a signal peptide; the sequence is MESYDKVGSNKVPCLLILTCIIMSS. The propeptide occupies 26 to 34; the sequence is FVNNNIVQA. The region spanning 47–93 is the EGF-like; atypical domain; that stretch reads EAVANINCSGHGRAFLDGILSDGSPKCECNTCYTGADCSEKITGCSA. Asn53 carries N-linked (GlcNAc...) asparagine glycosylation. 3 disulfides stabilise this stretch: Cys54-Cys73, Cys75-Cys84, and Cys78-Cys91. 126–134 lines the chloride pocket; that stretch reads YFFNPVSNF. 2 N-linked (GlcNAc...) asparagine glycosylation sites follow: Asn180 and Asn225. Lys285 bears the N6-(pyridoxal phosphate)lysine mark. Asn342 and Asn362 each carry an N-linked (GlcNAc...) asparagine glycan. An intrachain disulfide couples Cys402 to Cys410.

The protein belongs to the alliinase family. In terms of assembly, homodimer. The cofactor is pyridoxal 5'-phosphate.

The protein localises to the vacuole. It carries out the reaction an S-alkyl-L-cysteine S-oxide = an S-alkyl sulfenate + 2-aminoprop-2-enoate. This Allium cepa (Onion) protein is Alliin lyase.